Here is a 763-residue protein sequence, read N- to C-terminus: ATP-dependent RNA helicase SUV3 homolog, mitochondrial (763 aa).

A mitochondrion-targeting transit peptide spans 1 to 43 (MQNCRRCISLTGLLRMTLYLRPSFSIDLSLRRLHRAAFLFSRK). The 141-residue stretch at 181 to 321 (NARAITRKIV…ALDLLQKICE (141 aa)) folds into the Helicase ATP-binding domain. 194 to 201 (GPTNSGKT) lines the ATP pocket. Positions 330–508 (RLYDRLTELT…PTADQIELYA (179 aa)) constitute a Helicase C-terminal domain. The disordered stretch occupies residues 724 to 763 (AQQLGKSNSQSNENSEPVVNSDDEDNYSGIGRKTRKKRRK). A compositionally biased stretch (polar residues) spans 727 to 741 (LGKSNSQSNENSEPV).

The protein belongs to the helicase family. Mg(2+) serves as cofactor. It depends on Mn(2+) as a cofactor.

The protein localises to the mitochondrion. It carries out the reaction ATP + H2O = ADP + phosphate + H(+). In terms of biological role, major helicase player in mitochondrial RNA metabolism and maintenance. Likely component of the mitochondrial degradosome (mtEXO) complex, that degrades 3' overhang double-stranded RNA with a 3'-to-5' directionality in an ATP-dependent manner. ATPase and ATP-dependent multisubstrate helicase, able to unwind double-stranded (ds) DNA and RNA, and RNA/DNA heteroduplexes in the 5'-to-3' direction. Regulates mRNA stability and is required for the correct processing and maturation of mitochondrial transcripts. This Drosophila melanogaster (Fruit fly) protein is ATP-dependent RNA helicase SUV3 homolog, mitochondrial.